The primary structure comprises 207 residues: MTAHNPVQGTLPRSNEEIAARVKAMEAILVDKGLISTDAIDHMSSVYENEVGPQLGAKIVARAWVDPEFKQRLLTDATSACREMGVGGMQGEEMVVLENTGTVHNMVVCTLCSCYPWPVLGLPPNWYKYPAYRARAVRDPRGVLAEFGYTPDPDVEIRIWDSSAELRYWVLPQRPAGTENFTEEQLADLVTRDSLIGVSVPTTPSKA.

Cys109, Cys112, Ser113, and Cys114 together coordinate Co(3+).

It belongs to the nitrile hydratase subunit alpha family. Heterodimer of an alpha and a beta chain. Co(3+) serves as cofactor.

The enzyme catalyses an aliphatic primary amide = an aliphatic nitrile + H2O. Its function is as follows. NHase catalyzes the hydration of various nitrile compounds to the corresponding amides. This chain is Low-molecular weight cobalt-containing nitrile hydratase subunit alpha, found in Rhodococcus rhodochrous.